Reading from the N-terminus, the 195-residue chain is 2-cysteine peroxiredoxin, chloroplastic (195 aa).

The Thioredoxin domain occupies 3–161 (IRVGQKAPDF…ALRTLQAIQY (159 aa)). Residue Cys49 is the Cysteine sulfenic acid (-SOH) intermediate of the active site.

This sequence belongs to the peroxiredoxin family. AhpC/Prx1 subfamily. Homodimer; disulfide-linked, upon oxidation.

It localises to the plastid. The protein localises to the chloroplast. The catalysed reaction is a hydroperoxide + [thioredoxin]-dithiol = an alcohol + [thioredoxin]-disulfide + H2O. Thiol-specific peroxidase that catalyzes the reduction of hydrogen peroxide and organic hydroperoxides to water and alcohols, respectively. Plays a role in cell protection against oxidative stress by detoxifying peroxides. The chain is 2-cysteine peroxiredoxin, chloroplastic from Chattonella marina var. antiqua (Red tide flagellate).